A 303-amino-acid chain; its full sequence is Ubiquinone biosynthesis protein COQ4, mitochondrial (303 aa).

4 residues coordinate Zn(2+): histidine 191, aspartate 192, histidine 195, and glutamate 207.

It belongs to the COQ4 family. Component of a multi-subunit COQ enzyme complex, composed of at least COQ3, COQ4, COQ5, COQ6, COQ7 and COQ9. Zn(2+) serves as cofactor.

It is found in the mitochondrion inner membrane. It catalyses the reaction a 4-hydroxy-3-methoxy-5-(all-trans-polyprenyl)benzoate + H(+) = a 2-methoxy-6-(all-trans-polyprenyl)phenol + CO2. It participates in cofactor biosynthesis; ubiquinone biosynthesis. Its function is as follows. Lyase that catalyzes the C1-decarboxylation of 4-hydroxy-3-methoxy-5-(all-trans-polyprenyl)benzoic acid into 2-methoxy-6-(all-trans-polyprenyl)phenol during ubiquinone biosynthesis. The protein is Ubiquinone biosynthesis protein COQ4, mitochondrial of Komagataella phaffii (strain GS115 / ATCC 20864) (Yeast).